A 144-amino-acid polypeptide reads, in one-letter code: 6-pyruvoyl tetrahydrobiopterin synthase (144 aa).

The propeptide occupies 1-4; that stretch reads MNAA. The residue at position 18 (Ser18) is a Phosphoserine. His23 is a binding site for Zn(2+). The residue at position 27 (Ser27) is a Phosphoserine. The Proton acceptor role is filled by Cys42. His48 and His50 together coordinate Zn(2+). His89 functions as the Charge relay system in the catalytic mechanism. The residue at position 127 (Tyr127) is a Phosphotyrosine. Glu133 serves as the catalytic Charge relay system.

The protein belongs to the PTPS family. As to quaternary structure, homohexamer formed of two homotrimers in a head to head fashion. Zn(2+) serves as cofactor. Post-translationally, phosphorylation of Ser-18 is required for maximal enzyme activity.

It carries out the reaction 7,8-dihydroneopterin 3'-triphosphate = 6-pyruvoyl-5,6,7,8-tetrahydropterin + triphosphate + H(+). The protein operates within cofactor biosynthesis; tetrahydrobiopterin biosynthesis; tetrahydrobiopterin from 7,8-dihydroneopterin triphosphate: step 1/3. Involved in the biosynthesis of tetrahydrobiopterin, an essential cofactor of aromatic amino acid hydroxylases. Catalyzes the transformation of 7,8-dihydroneopterin triphosphate into 6-pyruvoyl tetrahydropterin. The chain is 6-pyruvoyl tetrahydrobiopterin synthase (Pts) from Rattus norvegicus (Rat).